The primary structure comprises 602 residues: Sulfite reductase [NADPH] hemoprotein beta-component (602 aa).

Residues 1-23 (MDDTKTASPAPARAYETPPAERP) form a disordered region. Cysteine 458, cysteine 464, cysteine 503, and cysteine 507 together coordinate [4Fe-4S] cluster. Cysteine 507 is a binding site for siroheme.

Belongs to the nitrite and sulfite reductase 4Fe-4S domain family. In terms of assembly, alpha(8)-beta(8). The alpha component is a flavoprotein, the beta component is a hemoprotein. Siroheme serves as cofactor. Requires [4Fe-4S] cluster as cofactor.

The enzyme catalyses hydrogen sulfide + 3 NADP(+) + 3 H2O = sulfite + 3 NADPH + 4 H(+). It participates in sulfur metabolism; hydrogen sulfide biosynthesis; hydrogen sulfide from sulfite (NADPH route): step 1/1. Component of the sulfite reductase complex that catalyzes the 6-electron reduction of sulfite to sulfide. This is one of several activities required for the biosynthesis of L-cysteine from sulfate. This chain is Sulfite reductase [NADPH] hemoprotein beta-component, found in Methylobacterium sp. (strain 4-46).